Consider the following 314-residue polypeptide: ATP synthase gamma chain (314 aa).

It belongs to the ATPase gamma chain family. As to quaternary structure, F-type ATPases have 2 components, CF(1) - the catalytic core - and CF(0) - the membrane proton channel. CF(1) has five subunits: alpha(3), beta(3), gamma(1), delta(1), epsilon(1). CF(0) has three main subunits: a, b and c.

It is found in the cellular thylakoid membrane. Functionally, produces ATP from ADP in the presence of a proton gradient across the membrane. The gamma chain is believed to be important in regulating ATPase activity and the flow of protons through the CF(0) complex. In Synechococcus sp. (strain JA-3-3Ab) (Cyanobacteria bacterium Yellowstone A-Prime), this protein is ATP synthase gamma chain.